The sequence spans 940 residues: Isoleucine--tRNA ligase (940 aa).

The 'HIGH' region signature appears at 58 to 68; the sequence is PYANGSIHIGH. Position 564 (E564) interacts with L-isoleucyl-5'-AMP. Residues 605 to 609 carry the 'KMSKS' region motif; sequence KMSKS. An ATP-binding site is contributed by K608. Zn(2+)-binding residues include C903, C906, C923, and C926.

It belongs to the class-I aminoacyl-tRNA synthetase family. IleS type 1 subfamily. Monomer. Zn(2+) serves as cofactor.

The protein resides in the cytoplasm. It catalyses the reaction tRNA(Ile) + L-isoleucine + ATP = L-isoleucyl-tRNA(Ile) + AMP + diphosphate. In terms of biological role, catalyzes the attachment of isoleucine to tRNA(Ile). As IleRS can inadvertently accommodate and process structurally similar amino acids such as valine, to avoid such errors it has two additional distinct tRNA(Ile)-dependent editing activities. One activity is designated as 'pretransfer' editing and involves the hydrolysis of activated Val-AMP. The other activity is designated 'posttransfer' editing and involves deacylation of mischarged Val-tRNA(Ile). The protein is Isoleucine--tRNA ligase of Shewanella sp. (strain ANA-3).